The primary structure comprises 283 residues: Elongation factor Ts (283 aa).

The interval 80 to 83 (TDFV) is involved in Mg(2+) ion dislocation from EF-Tu.

It belongs to the EF-Ts family.

It localises to the cytoplasm. In terms of biological role, associates with the EF-Tu.GDP complex and induces the exchange of GDP to GTP. It remains bound to the aminoacyl-tRNA.EF-Tu.GTP complex up to the GTP hydrolysis stage on the ribosome. The chain is Elongation factor Ts from Salmonella agona (strain SL483).